The following is a 299-amino-acid chain: CCR4-NOT transcription complex subunit 9 (299 aa).

An N-acetylmethionine modification is found at Met-1.

It belongs to the CNOT9 family. In terms of assembly, homodimer. Component of the CCR4-NOT complex; distinct complexes seem to exist that differ in the participation of probably mutually exclusive catalytic subunits. Interacts with MYB, ATF2, RARA, RARB, RARG, RXRA, RXRB and RXRG. Identified in a complex with ATF2 bound to target DNA. Interacts with NANOS2. Directly interacts with ZNF335. As to expression, detected in spleen, thymus, prostate, testis, ovary and intestine.

Its subcellular location is the nucleus. The protein localises to the cytoplasm. It localises to the P-body. Functionally, component of the CCR4-NOT complex which is one of the major cellular mRNA deadenylases and is linked to various cellular processes including bulk mRNA degradation, miRNA-mediated repression, translational repression during translational initiation and general transcription regulation. Additional complex functions may be a consequence of its influence on mRNA expression. Involved in down-regulation of MYB- and JUN-dependent transcription. May play a role in cell differentiation. Can bind oligonucleotides, such as poly-G, poly-C or poly-T (in vitro), but the physiological relevance of this is not certain. Does not bind poly-A. Enhances ligand-dependent transcriptional activity of nuclear hormone receptors, including RARA, expect ESR1-mediated transcription that is not only slightly increased, if at all. In Homo sapiens (Human), this protein is CCR4-NOT transcription complex subunit 9.